Reading from the N-terminus, the 299-residue chain is Methylsterol monooxygenase 1-2 (299 aa).

Helical transmembrane passes span cysteine 39 to isoleucine 59, phenylalanine 96 to isoleucine 116, and serine 118 to valine 138. A Fatty acid hydroxylase domain is found at leucine 132–threonine 267. Residues histidine 147–histidine 151 carry the Histidine box-1 motif. A Histidine box-2 motif is present at residues histidine 160–histidine 164. The chain crosses the membrane as a helical span at residues threonine 189–leucine 209. The Histidine box-3 signature appears at tyrosine 239 to tyrosine 245.

It belongs to the sterol desaturase family. Interacts with ACBP1. Requires Fe cation as cofactor. As to expression, expressed in embryo sacs, pollen and trichomes. Observed in leaves, roots, siliques and flowers.

The protein resides in the endoplasmic reticulum membrane. The enzyme catalyses 4,4-dimethyl-5alpha-cholest-7-en-3beta-ol + 6 Fe(II)-[cytochrome b5] + 3 O2 + 5 H(+) = 4alpha-carboxy-4beta-methyl-5alpha-cholest-7-ene-3beta-ol + 6 Fe(III)-[cytochrome b5] + 4 H2O. The catalysed reaction is 24-methylenecycloartanol + 6 Fe(II)-[cytochrome b5] + 3 O2 + 5 H(+) = 4alpha-carboxy-4beta,14alpha-dimethyl-9beta,19-cyclo-5alpha-ergost-24(24(1))-en-3beta-ol + 6 Fe(III)-[cytochrome b5] + 4 H2O. Functionally, non-heme iron oxygenase involved in sterols biosynthesis by catalyzing the removal of the first methyl group at the C-4 position. 4,4-dimethyl-9-beta,19-cyclopropylsterols such as 24-methylenecycloartanol are the preferred substrates. Acts as a rate-limiting enzyme in the sterol pathway via interaction with ACBP1; sterols serve as lipid modulators for gene expression of homeodomain-leucine zipper IV transcription factors. Together with SMO1-1, involved in the maintenance of sterol composition to balance auxin and cytokinin activities during embryogenesis. This chain is Methylsterol monooxygenase 1-2, found in Arabidopsis thaliana (Mouse-ear cress).